Reading from the N-terminus, the 358-residue chain is CX3C chemokine receptor 1 (358 aa).

The Extracellular portion of the chain corresponds to 1–26 (MHTTLPESTSENFEYYDLAEACDMGD). A helical membrane pass occupies residues 27–47 (IVALGTVFVVILYSLVFAFGL). The Cytoplasmic portion of the chain corresponds to 48–68 (VGNLLVVFALINSQRSKSITD). Residues 69 to 89 (IYLLNLALSDLLFVATLPFWT) traverse the membrane as a helical segment. Over 90–105 (HYVINEQGLHHATCKL) the chain is Extracellular. Cysteines 103 and 176 form a disulfide. Residues 106 to 126 (ITAFFFIGFFGGIFFITVISV) form a helical membrane-spanning segment. Over 127 to 147 (DRFLAIVLAANSMSNRTVQHG) the chain is Cytoplasmic. Residues 148-168 (VTTSLGVWAAAILVATPQFMF) traverse the membrane as a helical segment. Residues 169 to 186 (TREKENECFGDYPEILQE) lie on the Extracellular side of the membrane. The helical transmembrane segment at 187-207 (IWPVILNTEINFLGFLLPLLI) threads the bilayer. At 208-232 (MSYCYFRIMQTLFSCKNHKKAKAIR) the chain is on the cytoplasmic side. The helical transmembrane segment at 233-253 (LIFLVVVVFFLFWTPYNVMIF) threads the bilayer. Over 254 to 275 (LQTLNLYDFFPKCDVKRDLKLA) the chain is Extracellular. Residues 276–296 (ISVTETIAFSHCCLNPLIYAF) traverse the membrane as a helical segment. The Cytoplasmic portion of the chain corresponds to 297–358 (AGEKFRRYLY…TSDGDASILL (62 aa)). T349 bears the Phosphothreonine mark.

Belongs to the G-protein coupled receptor 1 family. As to quaternary structure, found in a ternary complex with CX3CL1 and ITGAV:ITGB3 or ITGA4:ITGB1. Post-translationally, this protein is not N-glycosylated which is unusual for G-protein-coupled receptors.

The protein localises to the cell membrane. Functionally, receptor for the C-X3-C chemokine fractalkine (CX3CL1) present on many early leukocyte cells; CX3CR1-CX3CL1 signaling exerts distinct functions in different tissue compartments, such as immune response, inflammation, cell adhesion and chemotaxis. CX3CR1-CX3CL1 signaling mediates cell migratory functions. Responsible for the recruitment of natural killer (NK) cells to inflamed tissues. Acts as a regulator of inflammation process leading to atherogenesis by mediating macrophage and monocyte recruitment to inflamed atherosclerotic plaques, promoting cell survival. Involved in airway inflammation by promoting interleukin 2-producing T helper (Th2) cell survival in inflamed lung. Involved in the migration of circulating monocytes to non-inflamed tissues, where they differentiate into macrophages and dendritic cells. Acts as a negative regulator of angiogenesis, probably by promoting macrophage chemotaxis. Plays a key role in brain microglia by regulating inflammatory response in the central nervous system (CNS) and regulating synapse maturation. Required to restrain the microglial inflammatory response in the CNS and the resulting parenchymal damage in response to pathological stimuli. Involved in brain development by participating in synaptic pruning, a natural process during which brain microglia eliminates extra synapses during postnatal development. Synaptic pruning by microglia is required to promote the maturation of circuit connectivity during brain development. Acts as an important regulator of the gut microbiota by controlling immunity to intestinal bacteria and fungi. Expressed in lamina propria dendritic cells in the small intestine, which form transepithelial dendrites capable of taking up bacteria in order to provide defense against pathogenic bacteria. Required to initiate innate and adaptive immune responses against dissemination of commensal fungi (mycobiota) component of the gut: expressed in mononuclear phagocytes (MNPs) and acts by promoting induction of antifungal IgG antibodies response to confer protection against disseminated C.albicans or C.auris infection. Also acts as a receptor for C-C motif chemokine CCL26, inducing cell chemotaxis. The sequence is that of CX3C chemokine receptor 1 from Bos taurus (Bovine).